The primary structure comprises 528 residues: Biotin carboxylase 1, chloroplastic (528 aa).

Residues 1–51 constitute a chloroplast transit peptide; that stretch reads MEATLPVCKSVTSTPGLFMGKTSGIRSSQCSFMMGNKVNFPRQRAQTAHVH. ATP-binding positions include Lys-179, Lys-221, 227 to 228, 263 to 266, and His-271; these read GG and EKYV. One can recognise an ATP-grasp domain in the interval 183-380; sequence RETMKKAGVP…LIEEQIRVAM (198 aa). Lys-300 contacts hydrogencarbonate. Positions 338 and 351 each coordinate ATP. 3 residues coordinate Mg(2+): Glu-338, Glu-351, and Asn-353. Residues Glu-338, Glu-351, and Asn-353 each coordinate Mn(2+). 3 residues coordinate hydrogencarbonate: Arg-355, Val-358, and Arg-401. Residue Arg-355 is part of the active site. Residue Arg-401 coordinates biotin.

As to quaternary structure, acetyl-CoA carboxylase is a heterohexamer composed of biotin carboxyl carrier protein, biotin carboxylase and two subunits each of ACCase subunit alpha and ACCase plastid-coded subunit beta (accD). Requires Mg(2+) as cofactor. It depends on Mn(2+) as a cofactor.

The protein resides in the plastid. It is found in the chloroplast. The enzyme catalyses N(6)-biotinyl-L-lysyl-[protein] + hydrogencarbonate + ATP = N(6)-carboxybiotinyl-L-lysyl-[protein] + ADP + phosphate + H(+). The protein operates within lipid metabolism; malonyl-CoA biosynthesis; malonyl-CoA from acetyl-CoA: step 1/1. This protein is a component of the acetyl coenzyme A carboxylase complex; first, biotin carboxylase catalyzes the carboxylation of the carrier protein and then the transcarboxylase transfers the carboxyl group to form malonyl-CoA. This chain is Biotin carboxylase 1, chloroplastic, found in Populus trichocarpa (Western balsam poplar).